Here is a 109-residue protein sequence, read N- to C-terminus: MNSVLGNQTDVAGLFLVNSSEALERAVRCCTQASVVTDDGFAEGGPDERSLYIMRVVQIAVMCVLSLTVVFGIFFLGCNLLIKSEGMINFLVKDRRPSKEVEAVVVGPY.

Asn-7 and Asn-18 each carry an N-linked (GlcNAc...) asparagine glycan. The chain crosses the membrane as a helical span at residues 56-76 (VVQIAVMCVLSLTVVFGIFFL). A Phosphoserine modification is found at Ser-98.

The protein belongs to the reprimo family.

The protein localises to the cytoplasm. Its subcellular location is the membrane. In terms of biological role, may be involved in the regulation of p53-dependent G2 arrest of the cell cycle. Seems to induce cell cycle arrest by inhibiting CDK1 activity and nuclear translocation of the CDC2 cyclin B1 complex. This Mus musculus (Mouse) protein is Protein reprimo (Rprm).